Reading from the N-terminus, the 352-residue chain is Phospho-N-acetylmuramoyl-pentapeptide-transferase (352 aa).

The next 10 helical transmembrane spans lie at 10-30 (YMFFSYISVRAGFAFFIALFL), 67-87 (TMGGLIFIFATIVASLLCADL), 88-108 (NNFYVIIGILCLVLFCTIGLV), 129-149 (LLSQFIASFICVFFLYIMGIN), 159-179 (YALFDGGIFMLALWILVIISS), 191-211 (GLATVPSIFSLLSLSAFLYLS), 227-247 (GLGELVVLSAALVGALMGFLW), 255-275 (VFMGDSGSLSIGAFLGYLGIV), 280-300 (ILLLLIGFVFVLETISVILQV), and 329-349 (KIIVRFWMIALLANIIALISI).

It belongs to the glycosyltransferase 4 family. MraY subfamily. It depends on Mg(2+) as a cofactor.

Its subcellular location is the cell inner membrane. It carries out the reaction UDP-N-acetyl-alpha-D-muramoyl-L-alanyl-gamma-D-glutamyl-meso-2,6-diaminopimeloyl-D-alanyl-D-alanine + di-trans,octa-cis-undecaprenyl phosphate = di-trans,octa-cis-undecaprenyl diphospho-N-acetyl-alpha-D-muramoyl-L-alanyl-D-glutamyl-meso-2,6-diaminopimeloyl-D-alanyl-D-alanine + UMP. Its pathway is cell wall biogenesis; peptidoglycan biosynthesis. Catalyzes the initial step of the lipid cycle reactions in the biosynthesis of the cell wall peptidoglycan: transfers peptidoglycan precursor phospho-MurNAc-pentapeptide from UDP-MurNAc-pentapeptide onto the lipid carrier undecaprenyl phosphate, yielding undecaprenyl-pyrophosphoryl-MurNAc-pentapeptide, known as lipid I. The sequence is that of Phospho-N-acetylmuramoyl-pentapeptide-transferase from Campylobacter lari (strain RM2100 / D67 / ATCC BAA-1060).